The following is a 386-amino-acid chain: WD repeat-containing protein 89 (386 aa).

WD repeat units follow at residues 21–65 (KEPT…LLRE), 68–107 (GSPG…EKPA), 112–156 (GYPS…QDLS), 167–207 (THSD…EEDA), 213–253 (NSVS…TDEP), and 318–357 (GHAA…KTFT).

This chain is WD repeat-containing protein 89 (Wdr89), found in Rattus norvegicus (Rat).